The sequence spans 189 residues: Low affinity inorganic phosphate transporter 2 (189 aa).

At 1–55 (TARYTALVAKDAKRAAADMGKVLHVEIDPEDAKVERMAKDESNQFGLFSWEFVRR) the chain is on the cytoplasmic side. Residues 56–76 (HGLHLFGTCSTWFLLDIAFYS) form a helical membrane-spanning segment. At 77–111 (QNLFQKDVFTAIGWIPPAKTMNAVQEVYKIARAQT) the chain is on the extracellular side. A helical membrane pass occupies residues 112–132 (LIALCSTVPGYWFTVAFIDII). Topologically, residues 133-134 (GR) are cytoplasmic. A helical membrane pass occupies residues 135-155 (FAIQLMGFFFMTVFMFAIAIP). Over 156-165 (YHHWTLQENR) the chain is Extracellular. The chain crosses the membrane as a helical span at residues 166–186 (IGFVIMYSLTFFFANFGPNAT). The Cytoplasmic portion of the chain corresponds to 187–189 (TFV).

Belongs to the major facilitator superfamily. Phosphate:H(+) symporter (TC 2.A.1.9) family.

The protein localises to the cell membrane. The enzyme catalyses phosphate(in) + H(+)(in) = phosphate(out) + H(+)(out). In terms of biological role, low-affinity transporter for external inorganic phosphate (Pi). This is Low affinity inorganic phosphate transporter 2 from Petunia hybrida (Petunia).